The following is a 375-amino-acid chain: Dual-specificity RNA methyltransferase RlmN (375 aa).

Residue glutamate 93 is the Proton acceptor of the active site. The Radical SAM core domain maps to 99 to 346 (ETNRGTLCVS…TTTRKTRGDD (248 aa)). Cysteine 106 and cysteine 351 form a disulfide bridge. [4Fe-4S] cluster is bound by residues cysteine 113, cysteine 117, and cysteine 120. Residues 177–178 (GE), serine 209, 231–233 (SLH), and asparagine 308 contribute to the S-adenosyl-L-methionine site. Residue cysteine 351 is the S-methylcysteine intermediate of the active site.

It belongs to the radical SAM superfamily. RlmN family. The cofactor is [4Fe-4S] cluster.

The protein resides in the cytoplasm. The enzyme catalyses adenosine(2503) in 23S rRNA + 2 reduced [2Fe-2S]-[ferredoxin] + 2 S-adenosyl-L-methionine = 2-methyladenosine(2503) in 23S rRNA + 5'-deoxyadenosine + L-methionine + 2 oxidized [2Fe-2S]-[ferredoxin] + S-adenosyl-L-homocysteine. It carries out the reaction adenosine(37) in tRNA + 2 reduced [2Fe-2S]-[ferredoxin] + 2 S-adenosyl-L-methionine = 2-methyladenosine(37) in tRNA + 5'-deoxyadenosine + L-methionine + 2 oxidized [2Fe-2S]-[ferredoxin] + S-adenosyl-L-homocysteine. Functionally, specifically methylates position 2 of adenine 2503 in 23S rRNA and position 2 of adenine 37 in tRNAs. m2A2503 modification seems to play a crucial role in the proofreading step occurring at the peptidyl transferase center and thus would serve to optimize ribosomal fidelity. The polypeptide is Dual-specificity RNA methyltransferase RlmN (Azoarcus sp. (strain BH72)).